The sequence spans 71 residues: Frenatin 2.3S (71 aa).

The N-terminal stretch at 1-22 is a signal peptide; sequence MAFLKKSLFLVLFLGLVSLSMG. The segment at 21–56 is disordered; the sequence is MGEREKREEEEEEEEENKEEEANEEGKGESEEKRGL. Positions 23–54 are excised as a propeptide; sequence EREKREEEEEEEEENKEEEANEEGKGESEEKR. Over residues 28–43 the composition is skewed to acidic residues; that stretch reads EEEEEEEEENKEEEAN. Residues 44 to 55 show a composition bias toward basic and acidic residues; it reads EEGKGESEEKRG. G70 is subject to Glycine amide; in Frenatin 2.1S.

The protein belongs to the frog skin active peptide (FSAP) family. Frenatin subfamily. Post-translationally, frenatin 2.3S is not amidated. In terms of tissue distribution, expressed by the skin glands.

It localises to the secreted. Functionally, antimicrobial peptide with potent activity against Gram-negative bacteria. Shows immunostimulatory actions both in vitro and in vivo. In vitro, is cytotoxic to non-small cell lung adenocarcinoma A549 cells. Also, stimulates production of pro-inflammatory cytokines by mouse peritoneal macrophages and down-regulates production of the anti-inflammatory cytokine IL-10 by lipopolysaccharide (LPS)-stimulated cells. In vivo, intraperitoneal injection in mice enhances the activation state and homing capacity of Th1 type lymphocytes and promotes the recruitment, activation and tumoricidal capacities of peritoneal NK cells. Has a very weak activity in stimulation of insulin release and a weak hemolytic activity. Antimicrobial peptide with potent activity against some Gram-positive and Gram-negative bacteria. Has a multifunctional mode of action. It displays depolarization and bacterial cell leakage, and can also internalize into bacterial cells and alter specific gene expression involved in bacterial resistance mechanisms. Does not agglutinate bacteria and lipid vesicles, even a high concentrations. Also displays moderate cellular protection against yellow fever virus (YFV)-infected Vero cells without causing significant cytotoxicity. Shows a weak hemolytic activity, and is not cytotoxic to monocytes. Frenatin 2.3S (version without Gly-71) shows no or very weak antibacterial activity, shows no or very weak cytotoxicity to lung adenocarcinoma A549 cells and shows very weak hemolysis. It only stimulates production of pro-inflammatory cytokines IL-23 (but not IL-1beta and TNF-alpha) by mouse peritoneal macrophages and has no effect on the production of the anti-inflammatory cytokine IL-10. Frenatin 2.3S (version without Gly-71) very weakly stimulates insulin release. The chain is Frenatin 2.3S from Sphaenorhynchus lacteus (Orinoco lime treefrog).